A 473-amino-acid chain; its full sequence is Photosystem II CP43 reaction center protein (473 aa).

Positions 1 to 14 (MKTLYSLRRFYHVE) are excised as a propeptide. An N-acetylthreonine modification is found at threonine 15. Position 15 is a phosphothreonine (threonine 15). 5 consecutive transmembrane segments (helical) span residues 69 to 93 (LFEVAHFVPEKPMYEQGLILLPHLA), 134 to 155 (LLGPETLEESFPFFGYVWKDRN), 178 to 200 (KALYFGGVYDTWAPGGGDVRKIT), 255 to 275 (KPFAWARRAFVWSGEAYLSYS), and 291 to 312 (WFNNTAYPSEFYGPTGPEASQA). Residue glutamate 367 participates in [CaMn4O5] cluster binding. The chain crosses the membrane as a helical span at residues 447-471 (RARAAAAGFEKGIDRDFEPVLSMTP).

Belongs to the PsbB/PsbC family. PsbC subfamily. As to quaternary structure, PSII is composed of 1 copy each of membrane proteins PsbA, PsbB, PsbC, PsbD, PsbE, PsbF, PsbH, PsbI, PsbJ, PsbK, PsbL, PsbM, PsbT, PsbX, PsbY, PsbZ, Psb30/Ycf12, at least 3 peripheral proteins of the oxygen-evolving complex and a large number of cofactors. It forms dimeric complexes. Binds multiple chlorophylls and provides some of the ligands for the Ca-4Mn-5O cluster of the oxygen-evolving complex. It may also provide a ligand for a Cl- that is required for oxygen evolution. PSII binds additional chlorophylls, carotenoids and specific lipids. is required as a cofactor.

Its subcellular location is the plastid. The protein localises to the chloroplast thylakoid membrane. In terms of biological role, one of the components of the core complex of photosystem II (PSII). It binds chlorophyll and helps catalyze the primary light-induced photochemical processes of PSII. PSII is a light-driven water:plastoquinone oxidoreductase, using light energy to abstract electrons from H(2)O, generating O(2) and a proton gradient subsequently used for ATP formation. The polypeptide is Photosystem II CP43 reaction center protein (Chloranthus spicatus (Chulantree)).